A 557-amino-acid polypeptide reads, in one-letter code: Inositol-3-phosphate synthase 1 (557 aa).

Residues G67, G68, N69, N70, D141, S177, V178, Q188, R191, T228, A229, N230, T231, G278, S279, D303, S306, N337, N338, D339, and K352 each contribute to the NAD(+) site. The residue at position 279 (S279) is a Phosphoserine. Residue S357 is modified to Phosphoserine. Residues G390, D391, D419, and S420 each coordinate NAD(+). The segment at 512-557 (GPGIKPGEVVATSPLPCKKEPTPATNGCTGDANGHPQAPTPKLSTA) is disordered. Phosphoserine is present on S524.

This sequence belongs to the myo-inositol 1-phosphate synthase family. It depends on NAD(+) as a cofactor. As to expression, in testis, it is expressed in Sertoli cells. Highly expressed in 2 types of germ cells, pachytene spermatocytes and round spermatids.

It is found in the cytoplasm. The catalysed reaction is D-glucose 6-phosphate = 1D-myo-inositol 3-phosphate. It functions in the pathway polyol metabolism; myo-inositol biosynthesis; myo-inositol from D-glucose 6-phosphate: step 1/2. Functionally, key enzyme in myo-inositol biosynthesis pathway that catalyzes the conversion of glucose 6-phosphate to 1-myo-inositol 1-phosphate in a NAD-dependent manner. Rate-limiting enzyme in the synthesis of all inositol-containing compounds. The polypeptide is Inositol-3-phosphate synthase 1 (Isyna1) (Mus musculus (Mouse)).